The following is a 217-amino-acid chain: 3,4-dihydroxy-2-butanone 4-phosphate synthase (217 aa).

D-ribulose 5-phosphate is bound by residues 37–38 (RE), D42, 150–154 (RGGHT), and E174. A Mg(2+)-binding site is contributed by E38. H153 contacts Mg(2+).

Belongs to the DHBP synthase family. Homodimer. Mg(2+) is required as a cofactor. Requires Mn(2+) as cofactor.

The catalysed reaction is D-ribulose 5-phosphate = (2S)-2-hydroxy-3-oxobutyl phosphate + formate + H(+). The protein operates within cofactor biosynthesis; riboflavin biosynthesis; 2-hydroxy-3-oxobutyl phosphate from D-ribulose 5-phosphate: step 1/1. Its function is as follows. Catalyzes the conversion of D-ribulose 5-phosphate to formate and 3,4-dihydroxy-2-butanone 4-phosphate. The polypeptide is 3,4-dihydroxy-2-butanone 4-phosphate synthase (Sodalis glossinidius (strain morsitans)).